Reading from the N-terminus, the 566-residue chain is Oxygen-dependent choline dehydrogenase (566 aa).

7–36 is an FAD binding site; sequence DYIICGAGSAGNVLATRLTEDPDVTVLLLE. Residues 180–202 are disordered; it reads NGYQQEGFGPMDRTVTPKGRRAS. His-474 functions as the Proton acceptor in the catalytic mechanism.

This sequence belongs to the GMC oxidoreductase family. FAD is required as a cofactor.

It carries out the reaction choline + A = betaine aldehyde + AH2. The enzyme catalyses betaine aldehyde + NAD(+) + H2O = glycine betaine + NADH + 2 H(+). The protein operates within amine and polyamine biosynthesis; betaine biosynthesis via choline pathway; betaine aldehyde from choline (cytochrome c reductase route): step 1/1. In terms of biological role, involved in the biosynthesis of the osmoprotectant glycine betaine. Catalyzes the oxidation of choline to betaine aldehyde and betaine aldehyde to glycine betaine at the same rate. The chain is Oxygen-dependent choline dehydrogenase from Burkholderia cenocepacia (strain HI2424).